Here is a 480-residue protein sequence, read N- to C-terminus: UDP-glucose 6-dehydrogenase 2 (480 aa).

Residues G8 to G13, D33, R38, V86 to T90, S127 to T128, and E161 contribute to the NAD(+) site. Residues E157 to E161, K216 to L223, and R256 to G269 contribute to the substrate site. The active-site Nucleophile is C272. C272–K275 serves as a coordination point for NAD(+). F334–K335 lines the substrate pocket. An NAD(+)-binding site is contributed by R342. R447 contributes to the substrate binding site.

This sequence belongs to the UDP-glucose/GDP-mannose dehydrogenase family. Preferentially expressed in roots.

It carries out the reaction UDP-alpha-D-glucose + 2 NAD(+) + H2O = UDP-alpha-D-glucuronate + 2 NADH + 3 H(+). The protein operates within nucleotide-sugar biosynthesis; UDP-alpha-D-glucuronate biosynthesis; UDP-alpha-D-glucuronate from UDP-alpha-D-glucose: step 1/1. With respect to regulation, inhibited by UDP-xylose. In terms of biological role, involved in the biosynthesis of UDP-glucuronic acid (UDP-GlcA), providing nucleotide sugars for cell-wall polymers. Required for the formation of cell wall ingrowths on the outer cell walls of nematode-induced syncytia. The chain is UDP-glucose 6-dehydrogenase 2 (UGD2) from Arabidopsis thaliana (Mouse-ear cress).